Reading from the N-terminus, the 445-residue chain is Phosphoglucosamine mutase 1 (445 aa).

Ser-102 (phosphoserine intermediate) is an active-site residue. Mg(2+)-binding residues include Ser-102, Asp-241, Asp-243, and Asp-245. Residue Ser-102 is modified to Phosphoserine.

Belongs to the phosphohexose mutase family. Mg(2+) is required as a cofactor. Activated by phosphorylation.

It carries out the reaction alpha-D-glucosamine 1-phosphate = D-glucosamine 6-phosphate. Functionally, catalyzes the conversion of glucosamine-6-phosphate to glucosamine-1-phosphate. This chain is Phosphoglucosamine mutase 1, found in Shewanella baltica (strain OS185).